Reading from the N-terminus, the 103-residue chain is Large ribosomal subunit protein uL24 (103 aa).

The protein belongs to the universal ribosomal protein uL24 family. In terms of assembly, part of the 50S ribosomal subunit.

Functionally, one of two assembly initiator proteins, it binds directly to the 5'-end of the 23S rRNA, where it nucleates assembly of the 50S subunit. Its function is as follows. One of the proteins that surrounds the polypeptide exit tunnel on the outside of the subunit. The polypeptide is Large ribosomal subunit protein uL24 (Ruegeria pomeroyi (strain ATCC 700808 / DSM 15171 / DSS-3) (Silicibacter pomeroyi)).